Reading from the N-terminus, the 636-residue chain is Threonine--tRNA ligase (636 aa).

The TGS domain maps to 1 to 63 (MPMITITLPD…EHDASLRIIT (63 aa)). The tract at residues 245 to 536 (DHRKIGKAQD…LIEHHAGAFP (292 aa)) is catalytic. Cysteine 336, histidine 387, and histidine 513 together coordinate Zn(2+).

Belongs to the class-II aminoacyl-tRNA synthetase family. Homodimer. Requires Zn(2+) as cofactor.

It is found in the cytoplasm. It catalyses the reaction tRNA(Thr) + L-threonine + ATP = L-threonyl-tRNA(Thr) + AMP + diphosphate + H(+). Functionally, catalyzes the attachment of threonine to tRNA(Thr) in a two-step reaction: L-threonine is first activated by ATP to form Thr-AMP and then transferred to the acceptor end of tRNA(Thr). Also edits incorrectly charged L-seryl-tRNA(Thr). This is Threonine--tRNA ligase from Xanthomonas campestris pv. campestris (strain 8004).